The following is a 34-amino-acid chain: MNDQMFVETLIITSSFFAIAAVLVLSVLLIERTG.

A helical membrane pass occupies residues 10–30 (LIITSSFFAIAAVLVLSVLLI).

It localises to the membrane. This is an uncharacterized protein from Escherichia coli O6:H1 (strain CFT073 / ATCC 700928 / UPEC).